The following is a 133-amino-acid chain: MSWQTYVDEHLMCDIDGQGQQLAASAIVGHDGSVWAQSSSFPQLKPEEITGIMKDFDEPGHLAPTGLHLGGTKYMVIQGEAGAVIRGKKGSGGITIKKTGQALVFGIYEEPVTPGQCNMVVERLGDYLIDQGL.

Cys13 and Cys117 form a disulfide bridge. The Involved in PIP2 interaction signature appears at 83–99; it reads AVIRGKKGSGGITIKKT. Phosphothreonine is present on Thr113.

This sequence belongs to the profilin family. As to quaternary structure, occurs in many kinds of cells as a complex with monomeric actin in a 1:1 ratio. In terms of processing, phosphorylated by MAP kinases.

It localises to the cytoplasm. The protein localises to the cytoskeleton. In terms of biological role, binds to actin and affects the structure of the cytoskeleton. At high concentrations, profilin prevents the polymerization of actin, whereas it enhances it at low concentrations. The chain is Profilin-4 from Corylus avellana (European hazel).